Consider the following 173-residue polypeptide: SPbeta prophage-derived putative HNH homing endonuclease YosQ (173 aa).

Functionally, a possible homing endonuclease, it is entirely encoded within the YosP intron. In Bacillus subtilis (strain 168), this protein is SPbeta prophage-derived putative HNH homing endonuclease YosQ (yosQ).